The sequence spans 381 residues: NAD-dependent methanol dehydrogenase (381 aa).

The protein belongs to the iron-containing alcohol dehydrogenase family. Homodecamer. Mg(2+) serves as cofactor. The cofactor is Zn(2+).

The protein resides in the cytoplasm. It carries out the reaction methanol + NAD(+) = formaldehyde + NADH + H(+). Its pathway is one-carbon metabolism; methanol degradation; formaldehyde from methanol: step 1/1. Its activity is regulated as follows. Stimulated by the activator protein Act which requires the presence of magnesium ions. Inhibited by 1,10-phenanthroline. Catalyzes the oxidation of methanol to yield formaldehyde. It possesses a NADH-dependent formaldehyde reductase activity and cannot use NADP. The sequence is that of NAD-dependent methanol dehydrogenase from Bacillus methanolicus.